Consider the following 92-residue polypeptide: Kinetoplastid membrane protein 11B (92 aa).

Belongs to the KMP-11 family. As to quaternary structure, monomer.

The protein resides in the cytoplasm. It localises to the cytoskeleton. It is found in the cell projection. Its subcellular location is the cilium. The protein localises to the flagellum. May be involved in the regulation of the cytoskeleton through interaction with the subpellicular microtubules. May be involved in parasite mobility and attachment to the surface of the host cell. Behaves as a strong immunogen during infection. This Leishmania infantum protein is Kinetoplastid membrane protein 11B (KMP-11B).